The chain runs to 96 residues: Large ribosomal subunit protein bL28 (96 aa).

Positions methionine 1–alanine 21 are disordered.

Belongs to the bacterial ribosomal protein bL28 family.

This Jannaschia sp. (strain CCS1) protein is Large ribosomal subunit protein bL28.